Consider the following 365-residue polypeptide: Methylthioribose-1-phosphate isomerase (365 aa).

Substrate contacts are provided by residues 53–55 (RGA), Arg-90, and Gln-201. Asp-242 functions as the Proton donor in the catalytic mechanism. Residue 252-253 (NK) coordinates substrate.

The protein belongs to the eIF-2B alpha/beta/delta subunits family. MtnA subfamily.

The catalysed reaction is 5-(methylsulfanyl)-alpha-D-ribose 1-phosphate = 5-(methylsulfanyl)-D-ribulose 1-phosphate. The protein operates within amino-acid biosynthesis; L-methionine biosynthesis via salvage pathway; L-methionine from S-methyl-5-thio-alpha-D-ribose 1-phosphate: step 1/6. In terms of biological role, catalyzes the interconversion of methylthioribose-1-phosphate (MTR-1-P) into methylthioribulose-1-phosphate (MTRu-1-P). The sequence is that of Methylthioribose-1-phosphate isomerase from Methylorubrum populi (strain ATCC BAA-705 / NCIMB 13946 / BJ001) (Methylobacterium populi).